The chain runs to 287 residues: Probable WRKY transcription factor 57 (287 aa).

Residues 86–99 are compositionally biased toward low complexity; sequence TSTNNNPSATSSSS. Residues 86 to 137 are disordered; it reads TSTNNNPSATSSSSEDPAENSTASAEKTPPPETPVKEKKKAQKRIRQPRFAF. Residues 122–132 show a composition bias toward basic residues; the sequence is EKKKAQKRIRQ. The WRKY DNA-binding region spans 141-206; that stretch reads SDVDNLEDGY…YEGQHCHQTI (66 aa). The tract at residues 248-287 is disordered; sequence DNNAPSPRLPRPTTEDTPAVSTPSEEGLLGDIVPQTMRNP. The span at 262–271 shows a compositional bias: polar residues; that stretch reads EDTPAVSTPS.

The protein belongs to the WRKY group II-c family.

Its subcellular location is the nucleus. Functionally, transcription factor. Interacts specifically with the W box (5'-(T)TGAC[CT]-3'), a frequently occurring elicitor-responsive cis-acting element. The protein is Probable WRKY transcription factor 57 (WRKY57) of Arabidopsis thaliana (Mouse-ear cress).